The chain runs to 366 residues: UDP-N-acetylglucosamine--N-acetylmuramyl-(pentapeptide) pyrophosphoryl-undecaprenol N-acetylglucosamine transferase (366 aa).

Residues 10-12 (TGG), Asn124, Arg166, Ser196, and Gln297 each bind UDP-N-acetyl-alpha-D-glucosamine.

Belongs to the glycosyltransferase 28 family. MurG subfamily.

Its subcellular location is the cell membrane. The enzyme catalyses di-trans,octa-cis-undecaprenyl diphospho-N-acetyl-alpha-D-muramoyl-L-alanyl-D-glutamyl-meso-2,6-diaminopimeloyl-D-alanyl-D-alanine + UDP-N-acetyl-alpha-D-glucosamine = di-trans,octa-cis-undecaprenyl diphospho-[N-acetyl-alpha-D-glucosaminyl-(1-&gt;4)]-N-acetyl-alpha-D-muramoyl-L-alanyl-D-glutamyl-meso-2,6-diaminopimeloyl-D-alanyl-D-alanine + UDP + H(+). It participates in cell wall biogenesis; peptidoglycan biosynthesis. In terms of biological role, cell wall formation. Catalyzes the transfer of a GlcNAc subunit on undecaprenyl-pyrophosphoryl-MurNAc-pentapeptide (lipid intermediate I) to form undecaprenyl-pyrophosphoryl-MurNAc-(pentapeptide)GlcNAc (lipid intermediate II). The chain is UDP-N-acetylglucosamine--N-acetylmuramyl-(pentapeptide) pyrophosphoryl-undecaprenol N-acetylglucosamine transferase from Alkaliphilus metalliredigens (strain QYMF).